The chain runs to 319 residues: Probable cytochrome c oxidase subunit 2 (319 aa).

The signal sequence occupies residues 1 to 33 (MSPNGSDRSPRRPMRRKLLQALTAGLVLATATG). 2 helical membrane-spanning segments follow: residues 63-83 (WAAA…SVFF) and 101-121 (LPIE…LFYF). The Cu cation site is built by His227, Cys262, Cys266, and His270.

The protein belongs to the cytochrome c oxidase subunit 2 family. Cu cation is required as a cofactor. The cofactor is heme.

The protein localises to the cell membrane. The catalysed reaction is 4 Fe(II)-[cytochrome c] + O2 + 8 H(+)(in) = 4 Fe(III)-[cytochrome c] + 2 H2O + 4 H(+)(out). Its function is as follows. Subunits I and II form the functional core of the enzyme complex. Electrons originating in cytochrome c are transferred via heme a and Cu(A) to the binuclear center formed by heme a3 and Cu(B). The sequence is that of Probable cytochrome c oxidase subunit 2 (ctaC) from Streptomyces coelicolor (strain ATCC BAA-471 / A3(2) / M145).